Consider the following 379-residue polypeptide: Alanine racemase (379 aa).

Lysine 35 serves as the catalytic Proton acceptor; specific for D-alanine. Residue lysine 35 is modified to N6-(pyridoxal phosphate)lysine. Arginine 133 is a binding site for substrate. The active-site Proton acceptor; specific for L-alanine is tyrosine 265. Methionine 312 contributes to the substrate binding site.

The protein belongs to the alanine racemase family. Pyridoxal 5'-phosphate serves as cofactor.

It catalyses the reaction L-alanine = D-alanine. The protein operates within amino-acid biosynthesis; D-alanine biosynthesis; D-alanine from L-alanine: step 1/1. In terms of biological role, catalyzes the interconversion of L-alanine and D-alanine. May also act on other amino acids. This Treponema denticola (strain ATCC 35405 / DSM 14222 / CIP 103919 / JCM 8153 / KCTC 15104) protein is Alanine racemase (alr).